Consider the following 425-residue polypeptide: Histidine--tRNA ligase (425 aa).

Belongs to the class-II aminoacyl-tRNA synthetase family. In terms of assembly, homodimer.

The protein resides in the cytoplasm. The enzyme catalyses tRNA(His) + L-histidine + ATP = L-histidyl-tRNA(His) + AMP + diphosphate + H(+). The sequence is that of Histidine--tRNA ligase from Tolumonas auensis (strain DSM 9187 / NBRC 110442 / TA 4).